Reading from the N-terminus, the 890-residue chain is DNA mismatch repair protein MutS (890 aa).

634–641 (GPNMGGKS) is an ATP binding site.

This sequence belongs to the DNA mismatch repair MutS family.

This protein is involved in the repair of mismatches in DNA. It is possible that it carries out the mismatch recognition step. This protein has a weak ATPase activity. This is DNA mismatch repair protein MutS from Burkholderia pseudomallei (strain 1710b).